The following is a 438-amino-acid chain: MGKPIVAIVGRPNVGKSTLFNKLAGKRISIVEDTPGVTRDRVYAQAEWLNYNFTIIDTGGIEPENNDVIISKMRRQAQVAIETANVIIFIVDGREGLTAADKEVAQMLRKSKKPIVLVVNKIDNMKQENYIYEFYNLGIGEPISISASQGLGLGDMLDKLVENFKNEGNEDEDSEYIKIAFIGKPNVGKSSLINKLLGEERVIVSDIPGTTRDAIDSYLETDEGKFLLIDTAGVRRKSKVKEEIEKYSVIRTYTAVERADVCILMLDATHDISEQDEKIIGYAHELNKAIMVVINKWDLVDKDTKTVNKYKTSIGSSLSFMSYAPYLFISAKTGQRVNRIFKMVRECYDNYCKQIKTGILNDIIGKIVMMKEPPVVGNKRLKIYYVTQIGTKPPTFVFFVNDSKCIHFSYRRYIENQLRDSFDFTGTGIKLEFRERKE.

EngA-type G domains lie at 4-168 (PIVA…KNEG) and 177-352 (IKIA…DNYC). GTP is bound by residues 10-17 (GRPNVGKS), 57-61 (DTGGI), 120-123 (NKID), 183-190 (GKPNVGKS), 230-234 (DTAGV), and 295-298 (NKWD). The KH-like domain occupies 353–437 (KQIKTGILND…GIKLEFRERK (85 aa)).

This sequence belongs to the TRAFAC class TrmE-Era-EngA-EngB-Septin-like GTPase superfamily. EngA (Der) GTPase family. In terms of assembly, associates with the 50S ribosomal subunit.

In terms of biological role, GTPase that plays an essential role in the late steps of ribosome biogenesis. The sequence is that of GTPase Der from Clostridium kluyveri (strain NBRC 12016).